The following is a 203-amino-acid chain: MARFRGSITKVSRRLGIALSPKAEKYLERRPYAPGEHGQSRRGKVSEYALQLREKQKMKYLYGVLEKQFRIYYKKAVAQRGVTGDNLVKMLERRFDNVVYRCGFSPSRAGARQLVTHGHMLVNGKKVNIPSFLVSPGDQIEFRQKSRNLDAVADSLNKAAESRIPEWIQVDKANRKAVFLAIPEREAVQEPFNEQLVVELYSK.

An S4 RNA-binding domain is found at 93-154 (RRFDNVVYRC…KSRNLDAVAD (62 aa)).

The protein belongs to the universal ribosomal protein uS4 family. Part of the 30S ribosomal subunit. Contacts protein S5. The interaction surface between S4 and S5 is involved in control of translational fidelity.

Functionally, one of the primary rRNA binding proteins, it binds directly to 16S rRNA where it nucleates assembly of the body of the 30S subunit. Its function is as follows. With S5 and S12 plays an important role in translational accuracy. This is Small ribosomal subunit protein uS4 from Chlorobaculum parvum (strain DSM 263 / NCIMB 8327) (Chlorobium vibrioforme subsp. thiosulfatophilum).